The chain runs to 325 residues: tRNA dimethylallyltransferase (325 aa).

G11–S18 lines the ATP pocket. A substrate-binding site is contributed by T13–S18. 2 interaction with substrate tRNA regions span residues D36–Q39 and Q160–R164.

Belongs to the IPP transferase family. Monomer. The cofactor is Mg(2+).

The enzyme catalyses adenosine(37) in tRNA + dimethylallyl diphosphate = N(6)-dimethylallyladenosine(37) in tRNA + diphosphate. Functionally, catalyzes the transfer of a dimethylallyl group onto the adenine at position 37 in tRNAs that read codons beginning with uridine, leading to the formation of N6-(dimethylallyl)adenosine (i(6)A). The chain is tRNA dimethylallyltransferase from Rickettsia canadensis (strain McKiel).